Here is a 298-residue protein sequence, read N- to C-terminus: Nucleotide-binding protein MAV_3359 (298 aa).

18–25 is an ATP binding site; sequence GLSGAGRG. 69 to 72 provides a ligand contact to GTP; the sequence is DVRS.

The protein belongs to the RapZ-like family.

Its function is as follows. Displays ATPase and GTPase activities. This Mycobacterium avium (strain 104) protein is Nucleotide-binding protein MAV_3359.